Here is an 857-residue protein sequence, read N- to C-terminus: Leucine--tRNA ligase (857 aa).

The 'HIGH' region signature appears at 42–52 (PYPSGTLHMGH). The 'KMSKS' region motif lies at 616–620 (KMSKS). Residue K619 participates in ATP binding.

The protein belongs to the class-I aminoacyl-tRNA synthetase family.

Its subcellular location is the cytoplasm. It catalyses the reaction tRNA(Leu) + L-leucine + ATP = L-leucyl-tRNA(Leu) + AMP + diphosphate. This Parasynechococcus marenigrum (strain WH8102) protein is Leucine--tRNA ligase.